A 322-amino-acid chain; its full sequence is Arginase-1 (322 aa).

An N6-succinyllysine modification is found at lysine 17. Serine 62 and serine 72 each carry phosphoserine. Position 75 is an N6-succinyllysine (lysine 75). Mn(2+) is bound by residues histidine 101, aspartate 124, histidine 126, and aspartate 128. Substrate-binding positions include 126–130 (HTDIN) and 137–139 (SGN). Serine 163 carries the phosphoserine modification. Substrate is bound at residue aspartate 183. A Phosphoserine modification is found at serine 217. Mn(2+) contacts are provided by aspartate 232 and aspartate 234. Threonine 246 and glutamate 277 together coordinate substrate.

Belongs to the arginase family. As to quaternary structure, homotrimer. Interacts with CMTM6. The cofactor is Mn(2+). In terms of tissue distribution, within the immune system initially reported to be selectively expressed in granulocytes (polymorphonuclear leukocytes [PMNs]). Also detected in macrophages mycobacterial granulomas. Expressed in group2 innate lymphoid cells (ILC2s) during lung disease.

Its subcellular location is the cytoplasm. The protein localises to the cytoplasmic granule. The enzyme catalyses L-arginine + H2O = urea + L-ornithine. It functions in the pathway nitrogen metabolism; urea cycle; L-ornithine and urea from L-arginine: step 1/1. Its function is as follows. Key element of the urea cycle converting L-arginine to urea and L-ornithine, which is further metabolized into metabolites proline and polyamides that drive collagen synthesis and bioenergetic pathways critical for cell proliferation, respectively; the urea cycle takes place primarily in the liver and, to a lesser extent, in the kidneys. In terms of biological role, functions in L-arginine homeostasis in nonhepatic tissues characterized by the competition between nitric oxide synthase (NOS) and arginase for the available intracellular substrate arginine. Arginine metabolism is a critical regulator of innate and adaptive immune responses. Involved in an antimicrobial effector pathway in polymorphonuclear granulocytes (PMN). Upon PMN cell death is liberated from the phagolysosome and depletes arginine in the microenvironment leading to suppressed T cell and natural killer (NK) cell proliferation and cytokine secretion. In group 2 innate lymphoid cells (ILC2s) promotes acute type 2 inflammation in the lung and is involved in optimal ILC2 proliferation but not survival. In humans, the immunological role in the monocytic/macrophage/dendritic cell (DC) lineage is unsure. The chain is Arginase-1 (ARG1) from Homo sapiens (Human).